A 576-amino-acid polypeptide reads, in one-letter code: 4-alpha-glucanotransferase DPE1, chloroplastic/amyloplastic (576 aa).

Residues 1 to 45 (MSILLRPSSSPSLCSSLKLFRLSSPDSLIDAAVLRNRTKPSQSFR) constitute a chloroplast transit peptide.

This sequence belongs to the disproportionating enzyme family.

It localises to the plastid. The protein localises to the chloroplast. The protein resides in the amyloplast. It catalyses the reaction Transfers a segment of a (1-&gt;4)-alpha-D-glucan to a new position in an acceptor, which may be glucose or a (1-&gt;4)-alpha-D-glucan.. In terms of biological role, chloroplastic alpha-glucanotransferase involved in maltotriose metabolism. Probably uses maltotriose as substrate to transfer a maltosyl unit from one molecule to another, resulting in glucose and maltopentaose. The latter can then be further metabolized to maltose and maltotriose by beta-amylase. Required for normal starch degradation in leaves. The polypeptide is 4-alpha-glucanotransferase DPE1, chloroplastic/amyloplastic (DPE1) (Arabidopsis thaliana (Mouse-ear cress)).